The chain runs to 624 residues: Chaperone protein HtpG (624 aa).

Positions 1 to 341 are a; substrate-binding; sequence MAVKQFKAES…SPDLSLNISR (341 aa). The tract at residues 342–550 is b; that stretch reads ELLQHDRQLK…DGELSIEMEK (209 aa). The interval 551-624 is c; it reads VLKMMPDNNN…FANDVASLMK (74 aa).

This sequence belongs to the heat shock protein 90 family. Homodimer.

The protein localises to the cytoplasm. In terms of biological role, molecular chaperone. Has ATPase activity. The protein is Chaperone protein HtpG of Clostridium acetobutylicum (strain ATCC 824 / DSM 792 / JCM 1419 / IAM 19013 / LMG 5710 / NBRC 13948 / NRRL B-527 / VKM B-1787 / 2291 / W).